The following is a 189-amino-acid chain: Chitin synthase 1 (189 aa).

Belongs to the chitin synthase family.

The protein localises to the cell membrane. The enzyme catalyses [(1-&gt;4)-N-acetyl-beta-D-glucosaminyl](n) + UDP-N-acetyl-alpha-D-glucosamine = [(1-&gt;4)-N-acetyl-beta-D-glucosaminyl](n+1) + UDP + H(+). Its function is as follows. Polymerizes chitin, a structural polymer of the cell wall and septum, by transferring the sugar moiety of UDP-GlcNAc to the non-reducing end of the growing chitin polymer. The sequence is that of Chitin synthase 1 (CHS1) from Xylohypha bantiana.